Here is a 202-residue protein sequence, read N- to C-terminus: Orotate phosphoribosyltransferase (202 aa).

5-phospho-alpha-D-ribose 1-diphosphate is bound by residues Lys-93 and Glu-113 to Ser-121. 2 residues coordinate orotate: Thr-117 and Arg-145.

It belongs to the purine/pyrimidine phosphoribosyltransferase family. PyrE subfamily. As to quaternary structure, homodimer. It depends on Mg(2+) as a cofactor.

It carries out the reaction orotidine 5'-phosphate + diphosphate = orotate + 5-phospho-alpha-D-ribose 1-diphosphate. The protein operates within pyrimidine metabolism; UMP biosynthesis via de novo pathway; UMP from orotate: step 1/2. In terms of biological role, catalyzes the transfer of a ribosyl phosphate group from 5-phosphoribose 1-diphosphate to orotate, leading to the formation of orotidine monophosphate (OMP). The sequence is that of Orotate phosphoribosyltransferase from Campylobacter curvus (strain 525.92).